Reading from the N-terminus, the 392-residue chain is [Phe13]-bombesin receptor (392 aa).

Topologically, residues 1-40 (MPEGFQSLNQTLPSAISSIAHLESLNDSFILGAKQSEDVS) are extracellular. N-linked (GlcNAc...) asparagine glycans are attached at residues Asn9 and Asn26. A helical transmembrane segment spans residues 41-62 (PGLEILALISVTYAVIISVGIL). Residues 63–81 (GNTILIKVFFKIKSMQTVP) are Cytoplasmic-facing. The helical transmembrane segment at 82-102 (NIFITSLAFGDLLLLLTCVPV) threads the bilayer. Topologically, residues 103-120 (DASRYIVDTWMFGRAGCK) are extracellular. A disulfide bridge connects residues Cys119 and Cys202. A helical membrane pass occupies residues 121–142 (IISFIQLTSVGVSVFTLTVLSA). Topologically, residues 143–162 (DRYRAIVKPLQLQTSDAVLK) are cytoplasmic. A helical transmembrane segment spans residues 163-183 (TCGKAVCVWIISMLLAAPEAV). Topologically, residues 184 to 219 (FSDLYEFGSSEKNTTFEACAPYPVSEKILQETHSLI) are extracellular. Residues 220 to 240 (CFLVFYIVPLSIISAYYFLIA) traverse the membrane as a helical segment. Residues 241-271 (KTLYKSTFNMPAEEHTHARKQIESRKRVAKT) lie on the Cytoplasmic side of the membrane. Residues 272-292 (VLVLVALFAVCWLPNHMLYLY) traverse the membrane as a helical segment. Residues 293–312 (RSFTYHSAVNSSAFHLSATI) are Extracellular-facing. The chain crosses the membrane as a helical span at residues 313–332 (FARVLAFSNSCVNPFALYWL). At 333 to 392 (SRSFRQHFKKQVYCCKTEPPASQQSPTHSSTITGITAVKGNIQMSEISITLLSAYDVKKE) the chain is on the cytoplasmic side. Cys346 is lipidated: S-palmitoyl cysteine.

The protein belongs to the G-protein coupled receptor 1 family. Expressed only in brain, primarily in cortex and forebrain and at low levels in the midbrain.

It localises to the cell membrane. In terms of biological role, the relative rank potency of bombesin-like peptides for this receptor is [Phe13]bombesin &gt; [Leu13]bombesin &gt; GRP &gt; neuromedin-B. This is [Phe13]-bombesin receptor (BB4) from Bombina orientalis (Oriental fire-bellied toad).